The following is a 353-amino-acid chain: Ribosomal RNA small subunit methyltransferase (353 aa).

Residues Met1–Lys10 are compositionally biased toward basic residues. A disordered region spans residues Met1–Gln23. Positions 35, 37, 62, 83, 111, and 126 each coordinate S-adenosyl-L-methionine. A disordered region spans residues Ala270–Lys313. Residues Met285 to Glu308 show a composition bias toward acidic residues.

It belongs to the class I-like SAM-binding methyltransferase superfamily. rRNA adenine N(6)-methyltransferase family. Expressed in rapidly dividing tissues, including root meristems and lateral root primordia, developing cotyledons and leaves, petals, anther, pollen grains and silique abscission zone.

It is found in the nucleus. The protein localises to the nucleolus. It catalyses the reaction adenosine(1785)/adenosine(1786) in 18S rRNA + 4 S-adenosyl-L-methionine = N(6)-dimethyladenosine(1785)/N(6)-dimethyladenosine(1786) in 18S rRNA + 4 S-adenosyl-L-homocysteine + 4 H(+). Its function is as follows. N6-adenine methyltransferase which modifies the AA dinucleotide at the plant nuclear 18S rRNA nucleotides A1785 and A1786. Required for generating appropriate patterns of gene expression during root development, including the cell-specific expression of transcriptional regulators involved in root hair and non-hair cells patterning. This is Ribosomal RNA small subunit methyltransferase from Arabidopsis thaliana (Mouse-ear cress).